Consider the following 448-residue polypeptide: Phosphoglucosamine mutase (448 aa).

Serine 100 serves as the catalytic Phosphoserine intermediate. Mg(2+) contacts are provided by serine 100, aspartate 240, aspartate 242, and aspartate 244. The residue at position 100 (serine 100) is a Phosphoserine.

The protein belongs to the phosphohexose mutase family. Requires Mg(2+) as cofactor. In terms of processing, activated by phosphorylation.

The catalysed reaction is alpha-D-glucosamine 1-phosphate = D-glucosamine 6-phosphate. Functionally, catalyzes the conversion of glucosamine-6-phosphate to glucosamine-1-phosphate. This chain is Phosphoglucosamine mutase, found in Clostridioides difficile (strain 630) (Peptoclostridium difficile).